The sequence spans 103 residues: RNA-binding protein YlxQ (103 aa).

This sequence belongs to the eukaryotic ribosomal protein eL8 family.

Its function is as follows. RNA-binding protein that recognizes the K-turn motif present in ribosomal RNA, but also in box C/D and box C'/D' sRNAs. The chain is RNA-binding protein YlxQ from Enterococcus faecium (Streptococcus faecium).